We begin with the raw amino-acid sequence, 229 residues long: DNA mismatch repair protein MutH (229 aa).

Belongs to the MutH family.

The protein resides in the cytoplasm. Sequence-specific endonuclease that cleaves unmethylated GATC sequences. It is involved in DNA mismatch repair. This Shigella boydii serotype 18 (strain CDC 3083-94 / BS512) protein is DNA mismatch repair protein MutH.